A 213-amino-acid chain; its full sequence is Glutamine amidotransferase-like class 1 domain-containing protein 1 (213 aa).

The first 20 residues, M1 to A20, serve as a signal peptide directing secretion.

The protein belongs to the peptidase C56 family. As to quaternary structure, homotetramer. Component of the FERRY complex.

Its subcellular location is the secreted. It is found in the early endosome. Its function is as follows. Component of the FERRY complex (Five-subunit Endosomal Rab5 and RNA/ribosome intermediary). The FERRY complex directly interacts with mRNAs and RAB5A, and functions as a RAB5A effector involved in the localization and the distribution of specific mRNAs most likely by mediating their endosomal transport. The complex recruits mRNAs and ribosomes to early endosomes through direct mRNA-interaction. This is Glutamine amidotransferase-like class 1 domain-containing protein 1 from Danio rerio (Zebrafish).